The sequence spans 78 residues: NAD(P)H-quinone oxidoreductase subunit L (78 aa).

The next 2 membrane-spanning stretches (helical) occupy residues 10-30 (LFVI…IPLG) and 48-68 (LLIY…APFL).

Belongs to the complex I NdhL subunit family. As to quaternary structure, NDH-1 can be composed of about 15 different subunits; different subcomplexes with different compositions have been identified which probably have different functions.

It localises to the cellular thylakoid membrane. The enzyme catalyses a plastoquinone + NADH + (n+1) H(+)(in) = a plastoquinol + NAD(+) + n H(+)(out). The catalysed reaction is a plastoquinone + NADPH + (n+1) H(+)(in) = a plastoquinol + NADP(+) + n H(+)(out). Its function is as follows. NDH-1 shuttles electrons from an unknown electron donor, via FMN and iron-sulfur (Fe-S) centers, to quinones in the respiratory and/or the photosynthetic chain. The immediate electron acceptor for the enzyme in this species is believed to be plastoquinone. Couples the redox reaction to proton translocation, and thus conserves the redox energy in a proton gradient. Cyanobacterial NDH-1 also plays a role in inorganic carbon-concentration. The protein is NAD(P)H-quinone oxidoreductase subunit L of Prochlorococcus marinus (strain SARG / CCMP1375 / SS120).